A 758-amino-acid chain; its full sequence is Polyribonucleotide nucleotidyltransferase (758 aa).

Residues Asp488 and Asp494 each contribute to the Mg(2+) site. The KH domain occupies 555–614 (PKLYTMKINPEKIRDVIGKGGAVIRALTEETGTQINIDEDGTITIASTDSAKADEAKRRI). Residues 624–692 (GKIYEGPVVK…EKGRVKLSMR (69 aa)) enclose the S1 motif domain. Positions 692-758 (RALLDRPMGD…AGEHSGQMDA (67 aa)) are disordered. Over residues 707–735 (PAERGERGDRGDRGDRPERGERRERREPA) the composition is skewed to basic and acidic residues. The segment covering 736–745 (GADQQQQQQQ) has biased composition (low complexity).

The protein belongs to the polyribonucleotide nucleotidyltransferase family. It depends on Mg(2+) as a cofactor.

It is found in the cytoplasm. The catalysed reaction is RNA(n+1) + phosphate = RNA(n) + a ribonucleoside 5'-diphosphate. Functionally, involved in mRNA degradation. Catalyzes the phosphorolysis of single-stranded polyribonucleotides processively in the 3'- to 5'-direction. This is Polyribonucleotide nucleotidyltransferase from Paracidovorax citrulli (strain AAC00-1) (Acidovorax citrulli).